The chain runs to 291 residues: Popeye domain-containing protein 3 (291 aa).

Asn-4 carries an N-linked (GlcNAc...) asparagine glycan. 3 helical membrane-spanning segments follow: residues Gly-27–Gly-44, Phe-48–Val-70, and Ile-77–Val-99.

Belongs to the popeye family. As to expression, expressed predominantly in skeletal muscle (at protein level). Also detected in heart.

It is found in the membrane. Its function is as follows. May play a role in the maintenance of heart function mediated, at least in part, through cAMP-binding. May play a role in the regulation of KCNK2/TREK-1-mediated current amplitude. The chain is Popeye domain-containing protein 3 (POPDC3) from Homo sapiens (Human).